The following is a 90-amino-acid chain: Phosphoribosyl-ATP pyrophosphatase (90 aa).

This sequence belongs to the PRA-PH family.

It localises to the cytoplasm. The enzyme catalyses 1-(5-phospho-beta-D-ribosyl)-ATP + H2O = 1-(5-phospho-beta-D-ribosyl)-5'-AMP + diphosphate + H(+). Its pathway is amino-acid biosynthesis; L-histidine biosynthesis; L-histidine from 5-phospho-alpha-D-ribose 1-diphosphate: step 2/9. The protein is Phosphoribosyl-ATP pyrophosphatase of Streptomyces griseus subsp. griseus (strain JCM 4626 / CBS 651.72 / NBRC 13350 / KCC S-0626 / ISP 5235).